The chain runs to 198 residues: MPIGVPKVPFRLPGEEDAGWVDVYNRLYRERLLFLGQQVDDEIANQLIGIMMYLNGEDENRDMYSYINSPGGAVLPGISVYDAMQFVVPDVHTICMGLAASMGSFILTGGEITKRIALPHARVMIHQPASSYYDGQAGECIMEAEEILKLRDCITRVYAQRTEKPLWVISEDMERDIFMSAKEARAYGIVDLIALEND.

Serine 101 serves as the catalytic Nucleophile. Histidine 126 is a catalytic residue.

The protein belongs to the peptidase S14 family. As to quaternary structure, component of the chloroplastic Clp protease core complex.

The protein resides in the plastid. It is found in the chloroplast stroma. It carries out the reaction Hydrolysis of proteins to small peptides in the presence of ATP and magnesium. alpha-casein is the usual test substrate. In the absence of ATP, only oligopeptides shorter than five residues are hydrolyzed (such as succinyl-Leu-Tyr-|-NHMec, and Leu-Tyr-Leu-|-Tyr-Trp, in which cleavage of the -Tyr-|-Leu- and -Tyr-|-Trp bonds also occurs).. Functionally, cleaves peptides in various proteins in a process that requires ATP hydrolysis. Has a chymotrypsin-like activity. Plays a major role in the degradation of misfolded proteins. This Psilotum nudum (Whisk fern) protein is ATP-dependent Clp protease proteolytic subunit.